Reading from the N-terminus, the 84-residue chain is Exodeoxyribonuclease 7 small subunit (84 aa).

The tract at residues 65–84 is disordered; it reads QEGDWTTSPFEPASGEPPGG.

It belongs to the XseB family. In terms of assembly, heterooligomer composed of large and small subunits.

The protein resides in the cytoplasm. It carries out the reaction Exonucleolytic cleavage in either 5'- to 3'- or 3'- to 5'-direction to yield nucleoside 5'-phosphates.. Bidirectionally degrades single-stranded DNA into large acid-insoluble oligonucleotides, which are then degraded further into small acid-soluble oligonucleotides. This chain is Exodeoxyribonuclease 7 small subunit, found in Syntrophobacter fumaroxidans (strain DSM 10017 / MPOB).